Consider the following 171-residue polypeptide: Calcium channel flower homolog (171 aa).

At 1 to 31 (MSGSGAAGAAAGPAPPAQEEGMTWWYRWLCR) the chain is on the cytoplasmic side. Residues 32–52 (LAGVLGAVSCAISGLFNCVTI) traverse the membrane as a helical segment. The Extracellular segment spans residues 53-56 (HPLN). A helical membrane pass occupies residues 57–77 (IAAGVWMIMNAFILLLCEAPF). Residues 78 to 101 (CCQFVEFANTVAEKVDRLRSWQKA) lie on the Cytoplasmic side of the membrane. Residues 102–122 (VFYCGMAIVPIVMSLTLTTLL) traverse the membrane as a helical segment. Residues 123-124 (GN) are Extracellular-facing. A helical transmembrane segment spans residues 125-141 (AIAFATGVLYGLSALGK). The Cytoplasmic segment spans residues 142–171 (KGDAISYARIQQQRQQADEEKLAETFEGEL).

The protein belongs to the calcium channel flower family. Interacts with adaptor protein complex 2 (AP-2). As to expression, expressed in neurons in the brain (at protein level). Expressed in neuroblastoma cell lines (at protein level). Expressed in cytotoxic T-lymphoocytes (at protein level). In terms of tissue distribution, low levels of expression in various tissues including the brain, eye, heart, liver and colon. Expression in the heart is at slightly higher levels than isoform 3. Expressed in skin cells. Very low levels of expression in the brain, liver and eye. Detected at very low levels of expression in skin cells. As to expression, expressed in various tissues, with highest levels of expression in the brain and eye. Expressed in skin cells. Low levels of expression in the liver, colon, heart and spleen. In terms of tissue distribution, barely detected in the brain and liver.

The protein resides in the cell membrane. It localises to the vesicle. In terms of biological role, transmembrane protein which mediates synaptic endocytosis and fitness-based cell culling. In response to different stimulus strengths, controls two major modes of synaptic vesicle (SV) retrieval in hippocampal neurons; Clathrin-mediated endocytosis (CME) in response to mild stimulation and activity-dependent bulk endocytosis (ADBE) in response to strong stimulation. In cytotoxic T-lymphoocytes (CTLs) facilitates calcium-dependent endocytosis of cytotoxic granules (CGs) at the immuno synapse. Different isoforms work as fitness fingerprints in 'loser' and 'winner' cells and thereby mediate win/lose decisions as part of the cell competition process. This chain is Calcium channel flower homolog (Cacfd1), found in Mus musculus (Mouse).